Reading from the N-terminus, the 187-residue chain is Probable chorismate pyruvate-lyase (187 aa).

The substrate site is built by Arg81, Leu119, and Glu178.

Belongs to the UbiC family.

It is found in the cytoplasm. It carries out the reaction chorismate = 4-hydroxybenzoate + pyruvate. The protein operates within cofactor biosynthesis; ubiquinone biosynthesis. Removes the pyruvyl group from chorismate, with concomitant aromatization of the ring, to provide 4-hydroxybenzoate (4HB) for the ubiquinone pathway. The sequence is that of Probable chorismate pyruvate-lyase from Thiobacillus denitrificans (strain ATCC 25259 / T1).